The sequence spans 55 residues: Large ribosomal subunit protein bL33 (55 aa).

This sequence belongs to the bacterial ribosomal protein bL33 family.

This Aliivibrio fischeri (strain ATCC 700601 / ES114) (Vibrio fischeri) protein is Large ribosomal subunit protein bL33.